A 264-amino-acid polypeptide reads, in one-letter code: Thymidylate synthase (264 aa).

Arginine 21 contributes to the dUMP binding site. Histidine 51 lines the (6R)-5,10-methylene-5,6,7,8-tetrahydrofolate pocket. Residue 126–127 (RR) participates in dUMP binding. Cysteine 146 serves as the catalytic Nucleophile. DUMP-binding positions include 166–169 (RSAD), asparagine 177, and 207–209 (HIY). (6R)-5,10-methylene-5,6,7,8-tetrahydrofolate is bound at residue aspartate 169. Alanine 263 provides a ligand contact to (6R)-5,10-methylene-5,6,7,8-tetrahydrofolate.

This sequence belongs to the thymidylate synthase family. Bacterial-type ThyA subfamily. Homodimer.

It is found in the cytoplasm. The enzyme catalyses dUMP + (6R)-5,10-methylene-5,6,7,8-tetrahydrofolate = 7,8-dihydrofolate + dTMP. The protein operates within pyrimidine metabolism; dTTP biosynthesis. Its function is as follows. Catalyzes the reductive methylation of 2'-deoxyuridine-5'-monophosphate (dUMP) to 2'-deoxythymidine-5'-monophosphate (dTMP) while utilizing 5,10-methylenetetrahydrofolate (mTHF) as the methyl donor and reductant in the reaction, yielding dihydrofolate (DHF) as a by-product. This enzymatic reaction provides an intracellular de novo source of dTMP, an essential precursor for DNA biosynthesis. This chain is Thymidylate synthase, found in Parabacteroides distasonis (strain ATCC 8503 / DSM 20701 / CIP 104284 / JCM 5825 / NCTC 11152).